The primary structure comprises 135 residues: MGLTYQLIPVLVCLLVCTSHFAHGHKCDITLAEIIKTLNILTTRKNSCMELPVADVFAAPKNTTEKETFCRAGIELRRIYRSHTCLNKFLGGLDRNLNSLASKTCSVNEAKTSTSTLKDLLEGLKTIMKEKYSKC.

The N-terminal stretch at 1-24 (MGLTYQLIPVLVCLLVCTSHFAHG) is a signal peptide. Disulfide bonds link C27-C135, C48-C85, and C70-C105. N62 is a glycosylation site (N-linked (GlcNAc...) asparagine).

The protein belongs to the IL-4/IL-13 family.

It is found in the secreted. Participates in at least several B-cell activation processes as well as of other cell types. It is a costimulator of DNA-synthesis. It induces the expression of class II MHC molecules on resting B-cells. It enhances both secretion and cell surface expression of IgE and IgG1. It also regulates the expression of the low affinity Fc receptor for IgE (CD23) on both lymphocytes and monocytes. Positively regulates IL31RA expression in macrophages. Stimulates autophagy in dendritic cells by interfering with mTORC1 signaling and through the induction of RUFY4. The sequence is that of Interleukin-4 (IL4) from Boselaphus tragocamelus (Nilgai).